We begin with the raw amino-acid sequence, 359 residues long: Probable dual-specificity RNA methyltransferase RlmN (359 aa).

Glu100 serves as the catalytic Proton acceptor. In terms of domain architecture, Radical SAM core spans 106-340 (TDKRLTVCVS…VSVRASRGRD (235 aa)). Residues Cys113 and Cys345 are joined by a disulfide bond. Residues Cys120, Cys124, and Cys127 each contribute to the [4Fe-4S] cluster site. S-adenosyl-L-methionine contacts are provided by residues 167–168 (GE), Ser197, 226–228 (SLH), and Asn302. Cys345 functions as the S-methylcysteine intermediate in the catalytic mechanism.

This sequence belongs to the radical SAM superfamily. RlmN family. It depends on [4Fe-4S] cluster as a cofactor.

Its subcellular location is the cytoplasm. The enzyme catalyses adenosine(2503) in 23S rRNA + 2 reduced [2Fe-2S]-[ferredoxin] + 2 S-adenosyl-L-methionine = 2-methyladenosine(2503) in 23S rRNA + 5'-deoxyadenosine + L-methionine + 2 oxidized [2Fe-2S]-[ferredoxin] + S-adenosyl-L-homocysteine. It carries out the reaction adenosine(37) in tRNA + 2 reduced [2Fe-2S]-[ferredoxin] + 2 S-adenosyl-L-methionine = 2-methyladenosine(37) in tRNA + 5'-deoxyadenosine + L-methionine + 2 oxidized [2Fe-2S]-[ferredoxin] + S-adenosyl-L-homocysteine. Its function is as follows. Specifically methylates position 2 of adenine 2503 in 23S rRNA and position 2 of adenine 37 in tRNAs. The chain is Probable dual-specificity RNA methyltransferase RlmN from Prochlorococcus marinus (strain NATL1A).